The primary structure comprises 418 residues: Serine hydroxymethyltransferase (418 aa).

(6S)-5,6,7,8-tetrahydrofolate-binding positions include Leu-120 and 124–126; that span reads GHL. N6-(pyridoxal phosphate)lysine is present on Lys-229. Position 353–355 (353–355) interacts with (6S)-5,6,7,8-tetrahydrofolate; sequence SPF.

This sequence belongs to the SHMT family. Homodimer. It depends on pyridoxal 5'-phosphate as a cofactor.

Its subcellular location is the cytoplasm. The catalysed reaction is (6R)-5,10-methylene-5,6,7,8-tetrahydrofolate + glycine + H2O = (6S)-5,6,7,8-tetrahydrofolate + L-serine. It participates in one-carbon metabolism; tetrahydrofolate interconversion. Its pathway is amino-acid biosynthesis; glycine biosynthesis; glycine from L-serine: step 1/1. In terms of biological role, catalyzes the reversible interconversion of serine and glycine with tetrahydrofolate (THF) serving as the one-carbon carrier. This reaction serves as the major source of one-carbon groups required for the biosynthesis of purines, thymidylate, methionine, and other important biomolecules. Also exhibits THF-independent aldolase activity toward beta-hydroxyamino acids, producing glycine and aldehydes, via a retro-aldol mechanism. The chain is Serine hydroxymethyltransferase from Psychrobacter sp. (strain PRwf-1).